A 194-amino-acid polypeptide reads, in one-letter code: Orotate phosphoribosyltransferase (194 aa).

Residues lysine 98 and 122–130 (EDVLTTGGS) contribute to the 5-phospho-alpha-D-ribose 1-diphosphate site. Residues threonine 126 and arginine 154 each contribute to the orotate site.

This sequence belongs to the purine/pyrimidine phosphoribosyltransferase family. PyrE subfamily. In terms of assembly, homodimer. Mg(2+) is required as a cofactor.

It carries out the reaction orotidine 5'-phosphate + diphosphate = orotate + 5-phospho-alpha-D-ribose 1-diphosphate. The protein operates within pyrimidine metabolism; UMP biosynthesis via de novo pathway; UMP from orotate: step 1/2. Functionally, catalyzes the transfer of a ribosyl phosphate group from 5-phosphoribose 1-diphosphate to orotate, leading to the formation of orotidine monophosphate (OMP). This is Orotate phosphoribosyltransferase from Deinococcus radiodurans (strain ATCC 13939 / DSM 20539 / JCM 16871 / CCUG 27074 / LMG 4051 / NBRC 15346 / NCIMB 9279 / VKM B-1422 / R1).